The primary structure comprises 938 residues: Bifunctional uridylyltransferase/uridylyl-removing enzyme (938 aa).

The uridylyltransferase stretch occupies residues 1-379 (MPPRLRPTHL…PGRAQKRKPL (379 aa)). Residues 380–733 (DEPGFHEVGG…GRIRSELNAA (354 aa)) form a uridylyl-removing region. In terms of domain architecture, HD spans 495–617 (VDEHTLRAVG…VQSPERLRLL (123 aa)). ACT domains are found at residues 734 to 813 (EVVV…PVAR) and 845 to 924 (VVEA…TAQA).

This sequence belongs to the GlnD family. Requires Mg(2+) as cofactor.

The enzyme catalyses [protein-PII]-L-tyrosine + UTP = [protein-PII]-uridylyl-L-tyrosine + diphosphate. The catalysed reaction is [protein-PII]-uridylyl-L-tyrosine + H2O = [protein-PII]-L-tyrosine + UMP + H(+). Uridylyltransferase (UTase) activity is inhibited by glutamine, while glutamine activates uridylyl-removing (UR) activity. Its function is as follows. Modifies, by uridylylation and deuridylylation, the PII regulatory proteins (GlnB and homologs), in response to the nitrogen status of the cell that GlnD senses through the glutamine level. Under low glutamine levels, catalyzes the conversion of the PII proteins and UTP to PII-UMP and PPi, while under higher glutamine levels, GlnD hydrolyzes PII-UMP to PII and UMP (deuridylylation). Thus, controls uridylylation state and activity of the PII proteins, and plays an important role in the regulation of nitrogen assimilation and metabolism. This Phenylobacterium zucineum (strain HLK1) protein is Bifunctional uridylyltransferase/uridylyl-removing enzyme.